The following is a 266-amino-acid chain: Ribonuclease HII (266 aa).

Residues 73–266 (SPVAGVDEAG…NCGSRQKCEG (194 aa)) enclose the RNase H type-2 domain. Residues D79, E80, and D173 each contribute to the a divalent metal cation site.

Belongs to the RNase HII family. Mn(2+) serves as cofactor. It depends on Mg(2+) as a cofactor.

It is found in the cytoplasm. The enzyme catalyses Endonucleolytic cleavage to 5'-phosphomonoester.. Endonuclease that specifically degrades the RNA of RNA-DNA hybrids. This is Ribonuclease HII from Pelotomaculum thermopropionicum (strain DSM 13744 / JCM 10971 / SI).